A 669-amino-acid polypeptide reads, in one-letter code: Protein ENTREP3 (669 aa).

A run of 3 helical transmembrane segments spans residues 34-54 (LLTL…FSMV), 67-87 (SCPS…IVSW), and 91-111 (FTLV…LSMA). Asn160 carries an N-linked (GlcNAc...) asparagine glycan. A helical membrane pass occupies residues 174–194 (LFSVCGLTICAAIICTLSAIV). Phosphoserine occurs at positions 359 and 390. Disordered regions lie at residues 387-420 (FEDS…PTAA), 445-502 (PRGG…TTSS), and 550-571 (RSAE…SGPT). Residues 399 to 408 (AARSYSCSAP) are compositionally biased toward low complexity. Ser494 is modified (phosphoserine). Ser575 is subject to Phosphoserine. Residues 597–624 (RRSPDPTGTGAHGYKQVRRSPWGRPGRE) form a disordered region.

Belongs to the ENTREP family. As to quaternary structure, may interact with WWOX.

It is found in the membrane. This chain is Protein ENTREP3, found in Mus musculus (Mouse).